A 156-amino-acid polypeptide reads, in one-letter code: Endoribonuclease YbeY (156 aa).

His-117, His-121, and His-127 together coordinate Zn(2+).

It belongs to the endoribonuclease YbeY family. Zn(2+) serves as cofactor.

It localises to the cytoplasm. In terms of biological role, single strand-specific metallo-endoribonuclease involved in late-stage 70S ribosome quality control and in maturation of the 3' terminus of the 16S rRNA. In Shewanella piezotolerans (strain WP3 / JCM 13877), this protein is Endoribonuclease YbeY.